Consider the following 468-residue polypeptide: UDP-N-acetylmuramate--L-alanine ligase (468 aa).

Position 122–128 (122–128) interacts with ATP; it reads GSHGKTT.

It belongs to the MurCDEF family.

It is found in the cytoplasm. It catalyses the reaction UDP-N-acetyl-alpha-D-muramate + L-alanine + ATP = UDP-N-acetyl-alpha-D-muramoyl-L-alanine + ADP + phosphate + H(+). Its pathway is cell wall biogenesis; peptidoglycan biosynthesis. Its function is as follows. Cell wall formation. This chain is UDP-N-acetylmuramate--L-alanine ligase, found in Synechococcus sp. (strain CC9902).